The sequence spans 662 residues: Glycogen debranching enzyme (662 aa).

The active-site Nucleophile is Asp-338. Glu-373 acts as the Proton donor in catalysis.

The protein belongs to the glycosyl hydrolase 13 family.

The enzyme catalyses Hydrolysis of (1-&gt;6)-alpha-D-glucosidic linkages to branches with degrees of polymerization of three or four glucose residues in limit dextrin.. Its pathway is glycan degradation; glycogen degradation. Functionally, removes maltotriose and maltotetraose chains that are attached by 1,6-alpha-linkage to the limit dextrin main chain, generating a debranched limit dextrin. The polypeptide is Glycogen debranching enzyme (Yersinia pseudotuberculosis serotype O:1b (strain IP 31758)).